The sequence spans 78 residues: Large ribosomal subunit protein bL28 (78 aa).

This sequence belongs to the bacterial ribosomal protein bL28 family.

The chain is Large ribosomal subunit protein bL28 from Prochlorococcus marinus (strain MIT 9312).